A 245-amino-acid polypeptide reads, in one-letter code: Adapter protein MecA (245 aa).

It belongs to the MecA family. In terms of assembly, homodimer.

Its function is as follows. Enables the recognition and targeting of unfolded and aggregated proteins to the ClpC protease or to other proteins involved in proteolysis. This chain is Adapter protein MecA, found in Streptococcus pneumoniae serotype 19F (strain G54).